We begin with the raw amino-acid sequence, 450 residues long: MTTWNFVCLGLGSNLGNRHEYIKRAYESLKKAGIRNLKSSVILETKALLLEGSPKEWDLPYFNCVAIGETQLSPDELVKEIKMIENRLSRDSSLKWGPRSIDIDVLLYGDESYSCCSERCIIPHPRLLERPFLLSMMASLCPYRYFRLRGSPYDGKTFAELAAIYPLTEKDVLGSFAPTTQIMGIVNVTDDSISDTGLFLEAKRAAAHAERLFAEGASIIDLGAQATNPRVRDLGSVEQEWERLEPVLQILAESWKDAKQYPDVSIDTFRPEVIRRAIQVFPIRWINDVSGGSLEMAHLAKDLGLRLLINHSCSLPPRPDCVLSYEESPVTQMLRWGESQLETFAQIGLDTSWQVVFDPGIGFGKTPVQSMQLMEGVAKFKHILKCPVLIGHSRKSCLSLLGRFSSQDRDWETIGCSVALHNQGVDYLRVHQVEGNRRVLAAAAWSGMPV.

An HPPK region spans residues 1 to 166 (MTTWNFVCLG…TFAELAAIYP (166 aa)). Residues 180–441 (TQIMGIVNVT…QVEGNRRVLA (262 aa)) enclose the Pterin-binding domain. A DHPS region spans residues 182-450 (IMGIVNVTDD…AAAAWSGMPV (269 aa)). Asn-187 serves as a coordination point for Mg(2+). (7,8-dihydropterin-6-yl)methyl diphosphate-binding positions include Thr-227, Asp-267, Asn-287, Asp-358, Lys-395, and 429-431 (RVH).

This sequence in the C-terminal section; belongs to the DHPS family. It in the N-terminal section; belongs to the HPPK family. Mg(2+) is required as a cofactor.

It catalyses the reaction 6-hydroxymethyl-7,8-dihydropterin + ATP = (7,8-dihydropterin-6-yl)methyl diphosphate + AMP + H(+). The catalysed reaction is (7,8-dihydropterin-6-yl)methyl diphosphate + 4-aminobenzoate = 7,8-dihydropteroate + diphosphate. The protein operates within cofactor biosynthesis; tetrahydrofolate biosynthesis; 2-amino-4-hydroxy-6-hydroxymethyl-7,8-dihydropteridine diphosphate from 7,8-dihydroneopterin triphosphate: step 4/4. It functions in the pathway cofactor biosynthesis; tetrahydrofolate biosynthesis; 7,8-dihydrofolate from 2-amino-4-hydroxy-6-hydroxymethyl-7,8-dihydropteridine diphosphate and 4-aminobenzoate: step 1/2. This is Folate synthesis bifunctional protein (folKP) from Chlamydia muridarum (strain MoPn / Nigg).